We begin with the raw amino-acid sequence, 216 residues long: Elongation factor Ts (216 aa).

The interval 81 to 84 (TDFV) is involved in Mg(2+) ion dislocation from EF-Tu.

The protein belongs to the EF-Ts family.

The protein resides in the cytoplasm. Its function is as follows. Associates with the EF-Tu.GDP complex and induces the exchange of GDP to GTP. It remains bound to the aminoacyl-tRNA.EF-Tu.GTP complex up to the GTP hydrolysis stage on the ribosome. The protein is Elongation factor Ts of Geobacter sulfurreducens (strain ATCC 51573 / DSM 12127 / PCA).